Consider the following 314-residue polypeptide: Deoxymugineic acid synthase 1-D (314 aa).

Positions methionine 1 to glutamine 21 are disordered. Aspartate 44 serves as a coordination point for NADP(+). The Proton donor role is filled by tyrosine 49. A substrate-binding site is contributed by histidine 112. NADP(+)-binding positions include alanine 158 to asparagine 159, glutamine 180, phenylalanine 258 to asparagine 266, and glutamate 273 to arginine 281.

Belongs to the aldo/keto reductase family. Mostly expressed in root tissues, observed, at low levels, in mesocotyl and embryonic roots, seedling roots, crown and seedling leafes, mature bracts, anthers, pistil, caryopsis and embryos.

The catalysed reaction is 2'-deoxymugineate + NAD(+) = 3''-deamino-3''-oxonicotianamine + NADH + H(+). The enzyme catalyses 2'-deoxymugineate + NADP(+) = 3''-deamino-3''-oxonicotianamine + NADPH + H(+). The protein operates within siderophore biosynthesis. Functionally, catalyzes the reduction of a 3''-keto intermediate during the biosynthesis of 2'-deoxymugineic acid (DMA) from L-Met. Involved in the formation of phytosiderophores (MAs) belonging to the mugineic acid family and required to acquire iron. The protein is Deoxymugineic acid synthase 1-D of Triticum aestivum (Wheat).